Reading from the N-terminus, the 156-residue chain is Ribosomal RNA large subunit methyltransferase H (156 aa).

Residues leucine 73, glycine 104, and 123 to 128 each bind S-adenosyl-L-methionine; that span reads LSDLTL.

This sequence belongs to the RNA methyltransferase RlmH family. As to quaternary structure, homodimer.

It is found in the cytoplasm. The enzyme catalyses pseudouridine(1915) in 23S rRNA + S-adenosyl-L-methionine = N(3)-methylpseudouridine(1915) in 23S rRNA + S-adenosyl-L-homocysteine + H(+). Its function is as follows. Specifically methylates the pseudouridine at position 1915 (m3Psi1915) in 23S rRNA. This chain is Ribosomal RNA large subunit methyltransferase H, found in Methylibium petroleiphilum (strain ATCC BAA-1232 / LMG 22953 / PM1).